The chain runs to 165 residues: Cytochrome c-550-like protein (165 aa).

The N-terminal stretch at 1 to 38 is a signal peptide; it reads MPHLDQKLPMRWRIPSRLWAWVGILALLWLGLASPVAA. Heme c contacts are provided by Cys83, Cys86, His87, and Cys137.

Belongs to the cytochrome c family. PsbV subfamily. Requires heme c as cofactor.

The protein resides in the cellular thylakoid membrane. Functionally, possible low-potential cytochrome c. The polypeptide is Cytochrome c-550-like protein (psbV2) (Synechococcus sp. (strain JA-2-3B'a(2-13)) (Cyanobacteria bacterium Yellowstone B-Prime)).